The primary structure comprises 435 residues: Protein phosphatase 2C homolog 2 (435 aa).

Residues 23–298 (IYGVSAMQGW…DNMTMIIIGL (276 aa)) enclose the PPM-type phosphatase domain. Asp-71, Gly-72, Asp-240, and Asp-289 together coordinate Mn(2+). Residues 366–435 (DQTEEDRDLP…TSGAPEKSTS (70 aa)) are disordered. Over residues 381 to 392 (ELPDSARNEREG) the composition is skewed to basic and acidic residues. Over residues 409-418 (GSSASTSEST) the composition is skewed to low complexity. Residues 419 to 435 (VTPAGSSTSGAPEKSTS) are compositionally biased toward polar residues.

This sequence belongs to the PP2C family. The cofactor is Mg(2+). Mn(2+) is required as a cofactor.

The protein localises to the cytoplasm. It localises to the nucleus. The catalysed reaction is O-phospho-L-seryl-[protein] + H2O = L-seryl-[protein] + phosphate. It carries out the reaction O-phospho-L-threonyl-[protein] + H2O = L-threonyl-[protein] + phosphate. Its function is as follows. Dephosphorylating regulator for many key proteins. Dephosphorylates phosphoglycerate kinase pgk1 at least on 'Ser-203' to negatively regulate targeting of pgk1 to the mitochondrion, thereby negatively regulating production of acetyl-CoA and consequently aflatoxin biosynthesis. The sequence is that of Protein phosphatase 2C homolog 2 from Aspergillus flavus (strain ATCC 200026 / FGSC A1120 / IAM 13836 / NRRL 3357 / JCM 12722 / SRRC 167).